A 340-amino-acid polypeptide reads, in one-letter code: Annexin A2-B (340 aa).

The interval alanine 2–leucine 25 is P10 binding site. Serine 27 bears the Phosphoserine; by PKC mark. 4 Annexin repeats span residues phenylalanine 34–lysine 105, threonine 106–lysine 177, glutamate 190–glutamine 262, and asparagine 266–glycine 337.

This sequence belongs to the annexin family. Tetramer of 2 light chains (p10 proteins) and 2 heavy chains (p36 proteins). As to expression, adult brain, heart, striated muscle, liver, kidney, and very high levels in skin.

The protein localises to the secreted. It is found in the extracellular space. Its subcellular location is the extracellular matrix. The protein resides in the basement membrane. Calcium-regulated membrane-binding protein whose affinity for calcium is greatly enhanced by anionic phospholipids. It binds two calcium ions with high affinity. This Xenopus laevis (African clawed frog) protein is Annexin A2-B (anxa2-b).